A 668-amino-acid polypeptide reads, in one-letter code: Major S-layer protein (668 aa).

The first 24 residues, 1-24 (MKRFAAVTLAALMLLTVFASAASA), serve as a signal peptide directing secretion. N-linked (GlcNAc...) asparagine glycosylation is found at N36, N65, N111, N265, N583, N596, N602, N608, N617, and N635. The disordered stretch occupies residues 584-650 (ETTSITKPDE…ESNGSPGFGV (67 aa)). Positions 596–611 (NETVSDNETMPDNTSS) are enriched in polar residues. Over residues 631-641 (EPTDNETEPDE) the composition is skewed to acidic residues. The chain crosses the membrane as a helical span at residues 644 to 664 (GSPGFGVVLGLAGLLGVVYLV).

The protein belongs to the Methanosarcinales S-layer protein family. Glycosylated.

The protein localises to the secreted. The protein resides in the cell wall. Its subcellular location is the S-layer. It localises to the cell membrane. S-layer protein. The S-layer is a paracrystalline mono-layered assembly of proteins which coat the surface of the cell. The sequence is that of Major S-layer protein from Methanosarcina barkeri (strain Fusaro / DSM 804).